We begin with the raw amino-acid sequence, 259 residues long: Ribonuclease HII (259 aa).

The segment at 1-26 (MLSTPPKLPSAHGPVHFPRRSGTGMN) is disordered. The 189-residue stretch at 55-243 (APVAGADEAG…VRAQQLVLFE (189 aa)) folds into the RNase H type-2 domain. Residues aspartate 61, glutamate 62, and aspartate 152 each coordinate a divalent metal cation.

The protein belongs to the RNase HII family. It depends on Mn(2+) as a cofactor. Requires Mg(2+) as cofactor.

The protein resides in the cytoplasm. The catalysed reaction is Endonucleolytic cleavage to 5'-phosphomonoester.. In terms of biological role, endonuclease that specifically degrades the RNA of RNA-DNA hybrids. This chain is Ribonuclease HII, found in Azorhizobium caulinodans (strain ATCC 43989 / DSM 5975 / JCM 20966 / LMG 6465 / NBRC 14845 / NCIMB 13405 / ORS 571).